The chain runs to 278 residues: Urease accessory protein UreD (278 aa).

Belongs to the UreD family. In terms of assembly, ureD, UreF and UreG form a complex that acts as a GTP-hydrolysis-dependent molecular chaperone, activating the urease apoprotein by helping to assemble the nickel containing metallocenter of UreC. The UreE protein probably delivers the nickel.

It localises to the cytoplasm. Required for maturation of urease via the functional incorporation of the urease nickel metallocenter. The sequence is that of Urease accessory protein UreD from Pseudomonas putida (strain ATCC 700007 / DSM 6899 / JCM 31910 / BCRC 17059 / LMG 24140 / F1).